Reading from the N-terminus, the 252-residue chain is 2-succinyl-6-hydroxy-2,4-cyclohexadiene-1-carboxylate synthase (252 aa).

The protein belongs to the AB hydrolase superfamily. MenH family. Monomer.

It carries out the reaction 5-enolpyruvoyl-6-hydroxy-2-succinyl-cyclohex-3-ene-1-carboxylate = (1R,6R)-6-hydroxy-2-succinyl-cyclohexa-2,4-diene-1-carboxylate + pyruvate. The protein operates within quinol/quinone metabolism; 1,4-dihydroxy-2-naphthoate biosynthesis; 1,4-dihydroxy-2-naphthoate from chorismate: step 3/7. It functions in the pathway quinol/quinone metabolism; menaquinone biosynthesis. Catalyzes a proton abstraction reaction that results in 2,5-elimination of pyruvate from 2-succinyl-5-enolpyruvyl-6-hydroxy-3-cyclohexene-1-carboxylate (SEPHCHC) and the formation of 2-succinyl-6-hydroxy-2,4-cyclohexadiene-1-carboxylate (SHCHC). The chain is 2-succinyl-6-hydroxy-2,4-cyclohexadiene-1-carboxylate synthase from Escherichia coli (strain UTI89 / UPEC).